The sequence spans 372 residues: Queuine tRNA-ribosyltransferase (372 aa).

Aspartate 89 functions as the Proton acceptor in the catalytic mechanism. Residues aspartate 89–phenylalanine 93, aspartate 143, glutamine 185, and glycine 212 contribute to the substrate site. The interval glycine 243–aspartate 249 is RNA binding. Aspartate 262 acts as the Nucleophile in catalysis. The RNA binding; important for wobble base 34 recognition stretch occupies residues threonine 267–arginine 271. Zn(2+)-binding residues include cysteine 300, cysteine 302, cysteine 305, and histidine 331.

This sequence belongs to the queuine tRNA-ribosyltransferase family. Homodimer. Within each dimer, one monomer is responsible for RNA recognition and catalysis, while the other monomer binds to the replacement base PreQ1. Zn(2+) serves as cofactor.

The catalysed reaction is 7-aminomethyl-7-carbaguanine + guanosine(34) in tRNA = 7-aminomethyl-7-carbaguanosine(34) in tRNA + guanine. The protein operates within tRNA modification; tRNA-queuosine biosynthesis. In terms of biological role, catalyzes the base-exchange of a guanine (G) residue with the queuine precursor 7-aminomethyl-7-deazaguanine (PreQ1) at position 34 (anticodon wobble position) in tRNAs with GU(N) anticodons (tRNA-Asp, -Asn, -His and -Tyr). Catalysis occurs through a double-displacement mechanism. The nucleophile active site attacks the C1' of nucleotide 34 to detach the guanine base from the RNA, forming a covalent enzyme-RNA intermediate. The proton acceptor active site deprotonates the incoming PreQ1, allowing a nucleophilic attack on the C1' of the ribose to form the product. After dissociation, two additional enzymatic reactions on the tRNA convert PreQ1 to queuine (Q), resulting in the hypermodified nucleoside queuosine (7-(((4,5-cis-dihydroxy-2-cyclopenten-1-yl)amino)methyl)-7-deazaguanosine). The chain is Queuine tRNA-ribosyltransferase from Chromohalobacter salexigens (strain ATCC BAA-138 / DSM 3043 / CIP 106854 / NCIMB 13768 / 1H11).